Reading from the N-terminus, the 858-residue chain is Protein translocase subunit SecA (858 aa).

Residues Gln-88, 106 to 110 (GEGKT), and Asp-494 each bind ATP. Residues 808–848 (KEDRGQLSYSGGGNAEDARNTPAKAAPRIGRNDPCPCGSGR) form a disordered region. The Zn(2+) site is built by Cys-842, Cys-844, Cys-853, and Cys-854.

It belongs to the SecA family. Monomer and homodimer. Part of the essential Sec protein translocation apparatus which comprises SecA, SecYEG and auxiliary proteins SecDF-YajC and YidC. It depends on Zn(2+) as a cofactor.

Its subcellular location is the cell inner membrane. The protein localises to the cytoplasm. The catalysed reaction is ATP + H2O + cellular proteinSide 1 = ADP + phosphate + cellular proteinSide 2.. In terms of biological role, part of the Sec protein translocase complex. Interacts with the SecYEG preprotein conducting channel. Has a central role in coupling the hydrolysis of ATP to the transfer of proteins into and across the cell membrane, serving as an ATP-driven molecular motor driving the stepwise translocation of polypeptide chains across the membrane. In Desulfovibrio desulfuricans (strain ATCC 27774 / DSM 6949 / MB), this protein is Protein translocase subunit SecA.